A 94-amino-acid polypeptide reads, in one-letter code: Co-chaperonin GroES (94 aa).

Belongs to the GroES chaperonin family. In terms of assembly, heptamer of 7 subunits arranged in a ring. Interacts with the chaperonin GroEL.

The protein localises to the cytoplasm. Its function is as follows. Together with the chaperonin GroEL, plays an essential role in assisting protein folding. The GroEL-GroES system forms a nano-cage that allows encapsulation of the non-native substrate proteins and provides a physical environment optimized to promote and accelerate protein folding. GroES binds to the apical surface of the GroEL ring, thereby capping the opening of the GroEL channel. The chain is Co-chaperonin GroES from Clostridium kluyveri (strain NBRC 12016).